Consider the following 66-residue polypeptide: Large ribosomal subunit protein uL29 (66 aa).

It belongs to the universal ribosomal protein uL29 family.

This chain is Large ribosomal subunit protein uL29, found in Sinorhizobium fredii (strain NBRC 101917 / NGR234).